Reading from the N-terminus, the 802-residue chain is DNA mismatch repair protein MutS (802 aa).

617 to 624 (GPNMGGKS) lines the ATP pocket.

The protein belongs to the DNA mismatch repair MutS family.

Functionally, this protein is involved in the repair of mismatches in DNA. It is possible that it carries out the mismatch recognition step. This protein has a weak ATPase activity. In Buchnera aphidicola subsp. Acyrthosiphon pisum (strain 5A), this protein is DNA mismatch repair protein MutS.